The following is a 130-amino-acid chain: Histone H2A type 1 (130 aa).

Residues 1–22 (MSGRGKQGGKARAKAKSRSSRA) form a disordered region. Ser2 bears the N-acetylserine mark. Phosphoserine; by RPS6KA5 is present on Ser2. Arg4 carries the citrulline; alternate modification. At Arg4 the chain carries Symmetric dimethylarginine; by PRMT5; alternate. Lys6 bears the N6-(2-hydroxyisobutyryl)lysine mark. The segment covering 7 to 19 (QGGKARAKAKSRS) has biased composition (basic residues). The residue at position 10 (Lys10) is an N6-(2-hydroxyisobutyryl)lysine; alternate. N6-lactoyllysine; alternate is present on Lys10. Lys10 is subject to N6-succinyllysine; alternate. Glycyl lysine isopeptide (Lys-Gly) (interchain with G-Cter in ubiquitin) cross-links involve residues Lys14 and Lys16. Residue Lys37 is modified to N6-(2-hydroxyisobutyryl)lysine; alternate. Residue Lys37 is modified to N6-(beta-hydroxybutyryl)lysine; alternate. Lys37 bears the N6-crotonyllysine; alternate mark. N6-(2-hydroxyisobutyryl)lysine is present on residues Lys75 and Lys76. Position 96 is an N6-(2-hydroxyisobutyryl)lysine; alternate (Lys96). An N6-succinyllysine; alternate modification is found at Lys96. Lys96 bears the N6-glutaryllysine; alternate mark. Lys100 is modified (N6-glutaryllysine). Residue Gln105 is modified to N5-methylglutamine. Lys119 carries the post-translational modification N6-(2-hydroxyisobutyryl)lysine; alternate. N6-crotonyllysine; alternate occurs at positions 119 and 120. N6-glutaryllysine; alternate occurs at positions 119 and 120. Lys120 participates in a covalent cross-link: Glycyl lysine isopeptide (Lys-Gly) (interchain with G-Cter in ubiquitin); alternate. A Phosphothreonine; by DCAF1 modification is found at Thr121. Residue Lys126 is modified to N6-crotonyllysine; alternate. Lys126 is subject to N6-glutaryllysine; alternate.

It belongs to the histone H2A family. In terms of assembly, the nucleosome is a histone octamer containing two molecules each of H2A, H2B, H3 and H4 assembled in one H3-H4 heterotetramer and two H2A-H2B heterodimers. The octamer wraps approximately 147 bp of DNA. Interacts with VRK1; the interaction is mediated by the nucleosome acidic patch, a cluster of negatively charged residues of H2A and H2B forming a cleft within the nucleosome core. In terms of processing, deiminated on Arg-4 in granulocytes upon calcium entry. Post-translationally, monoubiquitination of Lys-120 (H2AK119Ub) by RING1, TRIM37 and RNF2/RING2 complex gives a specific tag for epigenetic transcriptional repression and participates in X chromosome inactivation of female mammals. It is involved in the initiation of both imprinted and random X inactivation. Ubiquitinated H2A is enriched in inactive X chromosome chromatin. Ubiquitination of H2A functions downstream of methylation of 'Lys-27' of histone H3 (H3K27me). H2AK119Ub by RNF2/RING2 can also be induced by ultraviolet and may be involved in DNA repair. Following DNA double-strand breaks (DSBs), it is ubiquitinated through 'Lys-63' linkage of ubiquitin moieties by the E2 ligase UBE2N and the E3 ligases RNF8 and RNF168, leading to the recruitment of repair proteins to sites of DNA damage. Ubiquitination at Lys-14 and Lys-16 (H2AK13Ub and H2AK15Ub, respectively) in response to DNA damage is initiated by RNF168 that mediates monoubiquitination at these 2 sites, and 'Lys-63'-linked ubiquitin are then conjugated to monoubiquitin; RNF8 is able to extend 'Lys-63'-linked ubiquitin chains in vitro. H2AK119Ub and ionizing radiation-induced 'Lys-63'-linked ubiquitination (H2AK13Ub and H2AK15Ub) are distinct events. Phosphorylation on Ser-2 (H2AS1ph) is enhanced during mitosis. Phosphorylation on Ser-2 by RPS6KA5/MSK1 directly represses transcription. Acetylation of H3 inhibits Ser-2 phosphorylation by RPS6KA5/MSK1. Phosphorylation at Thr-121 (H2AT120ph) by DCAF1 is present in the regulatory region of many tumor suppresor genes and down-regulates their transcription. In terms of processing, symmetric dimethylation on Arg-4 by the PRDM1/PRMT5 complex may play a crucial role in the germ-cell lineage. Post-translationally, glutamine methylation at Gln-105 (H2AQ104me) by FBL is specifically dedicated to polymerase I. It is present at 35S ribosomal DNA locus and impairs binding of the FACT complex. Crotonylation (Kcr) is specifically present in male germ cells and marks testis-specific genes in post-meiotic cells, including X-linked genes that escape sex chromosome inactivation in haploid cells. Crotonylation marks active promoters and enhancers and confers resistance to transcriptional repressors. It is also associated with post-meiotically activated genes on autosomes. In terms of processing, lactylated in macrophages by EP300/P300 by using lactoyl-CoA directly derived from endogenous or exogenous lactate, leading to stimulates gene transcription.

The protein resides in the nucleus. It localises to the chromosome. In terms of biological role, core component of nucleosome. Nucleosomes wrap and compact DNA into chromatin, limiting DNA accessibility to the cellular machineries which require DNA as a template. Histones thereby play a central role in transcription regulation, DNA repair, DNA replication and chromosomal stability. DNA accessibility is regulated via a complex set of post-translational modifications of histones, also called histone code, and nucleosome remodeling. In Rattus norvegicus (Rat), this protein is Histone H2A type 1.